The sequence spans 139 residues: Small ribosomal subunit protein bS6 (139 aa).

The interval 97 to 139 is disordered; it reads TEASPMAKAKDERDSRRSSEGERRSAPAEATEEVKETAEKAAE. Residues 104-139 show a composition bias toward basic and acidic residues; the sequence is KAKDERDSRRSSEGERRSAPAEATEEVKETAEKAAE.

It belongs to the bacterial ribosomal protein bS6 family.

Binds together with bS18 to 16S ribosomal RNA. The polypeptide is Small ribosomal subunit protein bS6 (Shewanella sediminis (strain HAW-EB3)).